A 295-amino-acid polypeptide reads, in one-letter code: Diaminopimelate epimerase (295 aa).

Substrate-binding residues include Asn13 and Asn69. Cys78 functions as the Proton donor in the catalytic mechanism. Residues 79–80 (GN), Asn173, Asn212, and 230–231 (ER) each bind substrate. Catalysis depends on Cys239, which acts as the Proton acceptor. 240–241 (GT) is a substrate binding site.

It belongs to the diaminopimelate epimerase family. In terms of assembly, homodimer.

The protein localises to the cytoplasm. The enzyme catalyses (2S,6S)-2,6-diaminopimelate = meso-2,6-diaminopimelate. Its pathway is amino-acid biosynthesis; L-lysine biosynthesis via DAP pathway; DL-2,6-diaminopimelate from LL-2,6-diaminopimelate: step 1/1. In terms of biological role, catalyzes the stereoinversion of LL-2,6-diaminopimelate (L,L-DAP) to meso-diaminopimelate (meso-DAP), a precursor of L-lysine. This Methanococcus aeolicus (strain ATCC BAA-1280 / DSM 17508 / OCM 812 / Nankai-3) protein is Diaminopimelate epimerase.